Reading from the N-terminus, the 496-residue chain is MTELLSREEYAAIAATLDLPQRAFIDGGFRDACGGRTFASTNPATGELLAQVAACDAEDVGHAVASARRAFEDGRWRSRTPAERKAALLRLAELLEEHLLELAVMESLDSGKPIRECQHTDLPETINTLRWHAELIDKIYDSTAPVGSAALAMVVREPIGVVGLVLPWNFPLLMLAWKIGPALAAGCSVVVKPAPETSLTALRVAELASQAGIPAGVFNVVPGGGREAGEPLGRHPDVAMVSFTGSTATGRLFLKYAAESNLKRVVLECGGKNPAVVMNDVEDLDLVAQHVVNGAFWNMGENCSASSRLIVHAEVREALLERIGAQLREWRMGDPLDPRNRLGALVSPAHFEKVRAYLDQARTERLAVRFGGATEAGIFVEPTVVDGVSPHSRLFREEIFGPLLSVTSFDDIDEAIALANDTVYGLAASAYTGSLRHALRLSREIRAGIVTVNCFGEGDASTPFGGYKESGFGGRDKSVWAHDQYTELKTIWIDAS.

Leu166, Trp168, Lys192, Ser246, Thr249, and Tyr256 together coordinate NADH. Glu268 (proton acceptor) is an active-site residue. NADH is bound at residue Cys269. Cys303 serves as the catalytic Nucleophile. NADH is bound by residues Lys353 and Glu398.

This sequence belongs to the aldehyde dehydrogenase family. As to quaternary structure, homotetramer, formed by two symmetrical dimers.

The enzyme catalyses aminoacetaldehyde + NAD(+) + H2O = glycine + NADH + 2 H(+). It carries out the reaction 3-aminopropanal + NAD(+) + H2O = beta-alanine + NADH + 2 H(+). Functionally, NAD(+)-dependent aminoaldehyde dehydrogenase highly efficient with protonated aminoacetaldehyde (ACTAL) and 3-aminopropanaldehyde (APAL). Likely participates in a still uncharacterized metabolic pathway present in proteobacteria species, in which ACTAL might be an intermediate, yielding glycine. Highly prefers NAD(+) over NADP(+). Shows very poor activity with acetaldehyde, propanaldehyde, butanaldehyde, pentanaldehyde, dimethylaminoacetaldehyde, trimethylaminoacetaldehyde (betaine aldehyde), trimethylaminobutanaldehyde, short aliphatic hydroxyaldehydes such as 3-hydroxypropanaldehyde and 2-hydroxypropanaldehyde (lactaldehyde), and aromatic aldehydes. This is Aminoacetaldehyde dehydrogenase from Pseudomonas aeruginosa (strain ATCC 15692 / DSM 22644 / CIP 104116 / JCM 14847 / LMG 12228 / 1C / PRS 101 / PAO1).